The sequence spans 388 residues: Chorismate synthase (388 aa).

NADP(+) contacts are provided by Arg39 and Arg45. Residues 95-118 form a disordered region; sequence EKNEKSRRVSRPRPGHADLVGGMK. FMN is bound by residues 130–132, 251–252, Gly296, 311–315, and Arg337; these read RSS, NA, and KPIPT.

This sequence belongs to the chorismate synthase family. Homotetramer. It depends on FMNH2 as a cofactor.

It carries out the reaction 5-O-(1-carboxyvinyl)-3-phosphoshikimate = chorismate + phosphate. It participates in metabolic intermediate biosynthesis; chorismate biosynthesis; chorismate from D-erythrose 4-phosphate and phosphoenolpyruvate: step 7/7. Functionally, catalyzes the anti-1,4-elimination of the C-3 phosphate and the C-6 proR hydrogen from 5-enolpyruvylshikimate-3-phosphate (EPSP) to yield chorismate, which is the branch point compound that serves as the starting substrate for the three terminal pathways of aromatic amino acid biosynthesis. This reaction introduces a second double bond into the aromatic ring system. The chain is Chorismate synthase from Listeria monocytogenes serovar 1/2a (strain ATCC BAA-679 / EGD-e).